The primary structure comprises 489 residues: Potassium voltage-gated channel subfamily A member 7 (489 aa).

A helical transmembrane segment spans residues 176 to 196 (VLAVVSVLVILVSIVVFCLET). A glycan (N-linked (GlcNAc...) asparagine) is linked at Asn224. The helical transmembrane segment at 242 to 262 (FFVVETLCICWFSFELLVRLV) threads the bilayer. Residue Cys264 is the site of S-palmitoyl cysteine attachment. The chain crosses the membrane as a helical span at residues 274 to 294 (VMNLIDFVAILPYFVALGTEL). A helical; Voltage-sensor membrane pass occupies residues 309–328 (ILRVIRLVRVFRIFKLSRHS). A helical transmembrane segment spans residues 345–365 (LGLLIFFLFIGVVLFSSAVYF). The short motif at 391 to 396 (TVGYGD) is the Selectivity filter element. Residues 406–426 (IVGSLCAIAGVLTISLPVPVI) form a helical membrane-spanning segment.

This sequence belongs to the potassium channel family. A (Shaker) (TC 1.A.1.2) subfamily. Kv1.7/KCNA7 sub-subfamily. As to quaternary structure, heterotetramer of potassium channel proteins. In terms of tissue distribution, detected in heart, skeletal muscle, brain, and pancreatic islet cells.

The protein resides in the membrane. It catalyses the reaction K(+)(in) = K(+)(out). In terms of biological role, mediates the voltage-dependent potassium ion permeability of excitable membranes. Assuming opened or closed conformations in response to the voltage difference across the membrane, the protein forms a potassium-selective channel through which potassium ions may pass in accordance with their electrochemical gradient. Channels formed by isoform 1 inactivate faster than channels formed by isoform 2. The protein is Potassium voltage-gated channel subfamily A member 7 (Kcna7) of Mus musculus (Mouse).